The chain runs to 308 residues: Pantothenate synthetase (308 aa).

39 to 46 contacts ATP; the sequence is MGALHDGH. His-46 (proton donor) is an active-site residue. Gln-71 lines the (R)-pantoate pocket. Gln-71 lines the beta-alanine pocket. ATP is bound at residue 157-160; that stretch reads GEKD. Position 163 (Gln-163) interacts with (R)-pantoate. Residues Val-186 and 194 to 197 contribute to the ATP site; that span reads MSSR. Residues 286–308 form a disordered region; the sequence is IETPAGTAGPDGDRQYAQSPWRN.

Belongs to the pantothenate synthetase family. Homodimer.

The protein localises to the cytoplasm. It catalyses the reaction (R)-pantoate + beta-alanine + ATP = (R)-pantothenate + AMP + diphosphate + H(+). The protein operates within cofactor biosynthesis; (R)-pantothenate biosynthesis; (R)-pantothenate from (R)-pantoate and beta-alanine: step 1/1. Functionally, catalyzes the condensation of pantoate with beta-alanine in an ATP-dependent reaction via a pantoyl-adenylate intermediate. The protein is Pantothenate synthetase of Mycobacterium avium (strain 104).